Consider the following 443-residue polypeptide: Ribosomal protein uS12 methylthiotransferase RimO (443 aa).

The region spanning 10–120 is the MTTase N-terminal domain; that stretch reads PRVGFVSLGC…VMAAVHAQCP (111 aa). Positions 19, 55, 84, 152, 156, and 159 each coordinate [4Fe-4S] cluster. The region spanning 138–375 is the Radical SAM core domain; sequence LTPRHYAYLK…MALQAEISAR (238 aa). The 66-residue stretch at 378-443 folds into the TRAM domain; sequence ARRVGTECTV…DEHDLYGRVL (66 aa).

Belongs to the methylthiotransferase family. RimO subfamily. [4Fe-4S] cluster serves as cofactor.

It localises to the cytoplasm. The enzyme catalyses L-aspartate(89)-[ribosomal protein uS12]-hydrogen + (sulfur carrier)-SH + AH2 + 2 S-adenosyl-L-methionine = 3-methylsulfanyl-L-aspartate(89)-[ribosomal protein uS12]-hydrogen + (sulfur carrier)-H + 5'-deoxyadenosine + L-methionine + A + S-adenosyl-L-homocysteine + 2 H(+). Catalyzes the methylthiolation of an aspartic acid residue of ribosomal protein uS12. In Alkalilimnicola ehrlichii (strain ATCC BAA-1101 / DSM 17681 / MLHE-1), this protein is Ribosomal protein uS12 methylthiotransferase RimO.